The primary structure comprises 175 residues: NADH-ubiquinone oxidoreductase chain 6 (175 aa).

5 helical membrane passes run 1–21 (MMTYIVFILSIIFVMGFVGFS), 25–45 (SPIYGGLGLIVSGGVGCGIVL), 47–67 (FGGSFLGLMVFLIYLGGMMVV), 88–108 (VVLGTFITGLLMEFLMVYYVL), and 149–169 (YGTWLVIVTGWSLLIGVVVIM).

The protein belongs to the complex I subunit 6 family. Core subunit of respiratory chain NADH dehydrogenase (Complex I) which is composed of 45 different subunits.

Its subcellular location is the mitochondrion inner membrane. It carries out the reaction a ubiquinone + NADH + 5 H(+)(in) = a ubiquinol + NAD(+) + 4 H(+)(out). Core subunit of the mitochondrial membrane respiratory chain NADH dehydrogenase (Complex I) which catalyzes electron transfer from NADH through the respiratory chain, using ubiquinone as an electron acceptor. Essential for the catalytic activity and assembly of complex I. The protein is NADH-ubiquinone oxidoreductase chain 6 (MT-ND6) of Ovis aries (Sheep).